The sequence spans 347 residues: Quinolinate synthase (347 aa).

Residues His-47 and Ser-68 each contribute to the iminosuccinate site. Position 113 (Cys-113) interacts with [4Fe-4S] cluster. Iminosuccinate is bound by residues Tyr-139–Asn-141 and Ser-156. [4Fe-4S] cluster is bound at residue Cys-200. Iminosuccinate is bound by residues His-226–Glu-228 and Thr-243. A [4Fe-4S] cluster-binding site is contributed by Cys-297.

This sequence belongs to the quinolinate synthase family. Type 1 subfamily. The cofactor is [4Fe-4S] cluster.

The protein resides in the cytoplasm. The catalysed reaction is iminosuccinate + dihydroxyacetone phosphate = quinolinate + phosphate + 2 H2O + H(+). Its pathway is cofactor biosynthesis; NAD(+) biosynthesis; quinolinate from iminoaspartate: step 1/1. Its function is as follows. Catalyzes the condensation of iminoaspartate with dihydroxyacetone phosphate to form quinolinate. The polypeptide is Quinolinate synthase (Shigella boydii serotype 4 (strain Sb227)).